Here is a 1073-residue protein sequence, read N- to C-terminus: Carbamoyl phosphate synthase large chain (1073 aa).

The segment at 1–403 is carboxyphosphate synthetic domain; it reads MPKRTDIKSI…SLQKALRGLE (403 aa). ATP is bound by residues Arg-129, Arg-169, Gly-175, Gly-176, Glu-208, Leu-210, Glu-215, Gly-241, Val-242, His-243, Gln-285, and Glu-299. In terms of domain architecture, ATP-grasp 1 spans 133 to 328; sequence DKAMKDIGLE…IAKIAAKLAI (196 aa). Positions 285, 299, and 301 each coordinate Mg(2+). Residues Gln-285, Glu-299, and Asn-301 each contribute to the Mn(2+) site. The segment at 404-553 is oligomerization domain; that stretch reads VGACGLDPKV…YSTYEEECEA (150 aa). The interval 554–935 is carbamoyl phosphate synthetic domain; sequence NPSTRDKIMI…AFAKAQMGAS (382 aa). In terms of domain architecture, ATP-grasp 2 spans 678 to 869; the sequence is QQMVQRLSLL…LAMIAARVMA (192 aa). Residues Arg-714, His-753, Leu-755, Glu-760, Gly-785, Val-786, His-787, Ser-788, Gln-828, and Glu-840 each coordinate ATP. The Mg(2+) site is built by Gln-828, Glu-840, and Asn-842. Gln-828, Glu-840, and Asn-842 together coordinate Mn(2+). Positions 936-1073 constitute an MGS-like domain; the sequence is EVLPTGGTAF…LQDLHAGLKA (138 aa). Residues 936–1073 are allosteric domain; the sequence is EVLPTGGTAF…LQDLHAGLKA (138 aa).

This sequence belongs to the CarB family. Composed of two chains; the small (or glutamine) chain promotes the hydrolysis of glutamine to ammonia, which is used by the large (or ammonia) chain to synthesize carbamoyl phosphate. Tetramer of heterodimers (alpha,beta)4. It depends on Mg(2+) as a cofactor. Requires Mn(2+) as cofactor.

It catalyses the reaction hydrogencarbonate + L-glutamine + 2 ATP + H2O = carbamoyl phosphate + L-glutamate + 2 ADP + phosphate + 2 H(+). The enzyme catalyses hydrogencarbonate + NH4(+) + 2 ATP = carbamoyl phosphate + 2 ADP + phosphate + 2 H(+). Its pathway is amino-acid biosynthesis; L-arginine biosynthesis; carbamoyl phosphate from bicarbonate: step 1/1. It functions in the pathway pyrimidine metabolism; UMP biosynthesis via de novo pathway; (S)-dihydroorotate from bicarbonate: step 1/3. In terms of biological role, large subunit of the glutamine-dependent carbamoyl phosphate synthetase (CPSase). CPSase catalyzes the formation of carbamoyl phosphate from the ammonia moiety of glutamine, carbonate, and phosphate donated by ATP, constituting the first step of 2 biosynthetic pathways, one leading to arginine and/or urea and the other to pyrimidine nucleotides. The large subunit (synthetase) binds the substrates ammonia (free or transferred from glutamine from the small subunit), hydrogencarbonate and ATP and carries out an ATP-coupled ligase reaction, activating hydrogencarbonate by forming carboxy phosphate which reacts with ammonia to form carbamoyl phosphate. This Pseudomonas putida (strain ATCC 47054 / DSM 6125 / CFBP 8728 / NCIMB 11950 / KT2440) protein is Carbamoyl phosphate synthase large chain.